A 1220-amino-acid polypeptide reads, in one-letter code: DNA-directed RNA polymerase subunit beta (1220 aa).

The protein belongs to the RNA polymerase beta chain family. The RNAP catalytic core consists of 2 alpha, 1 beta, 1 beta' and 1 omega subunit. When a sigma factor is associated with the core the holoenzyme is formed, which can initiate transcription.

It carries out the reaction RNA(n) + a ribonucleoside 5'-triphosphate = RNA(n+1) + diphosphate. DNA-dependent RNA polymerase catalyzes the transcription of DNA into RNA using the four ribonucleoside triphosphates as substrates. The sequence is that of DNA-directed RNA polymerase subunit beta from Mesomycoplasma hyopneumoniae (strain J / ATCC 25934 / NCTC 10110) (Mycoplasma hyopneumoniae).